The chain runs to 319 residues: ATP-dependent 6-phosphofructokinase (319 aa).

ATP is bound at residue Gly-11. 21-25 (RAVVR) is an ADP binding site. Residues 72–73 (RC) and 102–105 (GEGS) each bind ATP. Residue Glu-103 coordinates Mg(2+). Position 126-128 (126-128 (TID)) interacts with substrate. The Proton acceptor role is filled by Asp-128. ADP is bound at residue Lys-155. Residues Arg-163 and 170 to 172 (MGR) each bind substrate. ADP is bound by residues 186 to 188 (GAE), Arg-212, and 214 to 216 (KIN). Substrate is bound by residues Glu-223, Arg-244, and 250–253 (HVQR).

The protein belongs to the phosphofructokinase type A (PFKA) family. ATP-dependent PFK group I subfamily. Prokaryotic clade 'B1' sub-subfamily. As to quaternary structure, homotetramer. It depends on Mg(2+) as a cofactor.

It is found in the cytoplasm. It catalyses the reaction beta-D-fructose 6-phosphate + ATP = beta-D-fructose 1,6-bisphosphate + ADP + H(+). Its pathway is carbohydrate degradation; glycolysis; D-glyceraldehyde 3-phosphate and glycerone phosphate from D-glucose: step 3/4. With respect to regulation, allosterically activated by ADP and other diphosphonucleosides, and allosterically inhibited by phosphoenolpyruvate. Functionally, catalyzes the phosphorylation of D-fructose 6-phosphate to fructose 1,6-bisphosphate by ATP, the first committing step of glycolysis. The protein is ATP-dependent 6-phosphofructokinase of Thermotoga petrophila (strain ATCC BAA-488 / DSM 13995 / JCM 10881 / RKU-1).